Consider the following 150-residue polypeptide: Sec-independent protein translocase protein TatB (150 aa).

A helical transmembrane segment spans residues 1–21; it reads MFDLSWSEIALVGVVALIVIG. Over residues 77-86 the composition is skewed to basic and acidic residues; sequence KIDQAIDPDG. The tract at residues 77 to 150 is disordered; it reads KIDQAIDPDG…RTDGSLPPQD (74 aa). The segment covering 109-135 has biased composition (pro residues); that stretch reads AAPPSLPPQAPAQPVPPATGAAPPSPS.

This sequence belongs to the TatB family. The Tat system comprises two distinct complexes: a TatABC complex, containing multiple copies of TatA, TatB and TatC subunits, and a separate TatA complex, containing only TatA subunits. Substrates initially bind to the TatABC complex, which probably triggers association of the separate TatA complex to form the active translocon.

The protein resides in the cell inner membrane. In terms of biological role, part of the twin-arginine translocation (Tat) system that transports large folded proteins containing a characteristic twin-arginine motif in their signal peptide across membranes. Together with TatC, TatB is part of a receptor directly interacting with Tat signal peptides. TatB may form an oligomeric binding site that transiently accommodates folded Tat precursor proteins before their translocation. The sequence is that of Sec-independent protein translocase protein TatB from Rhodospirillum rubrum (strain ATCC 11170 / ATH 1.1.1 / DSM 467 / LMG 4362 / NCIMB 8255 / S1).